We begin with the raw amino-acid sequence, 139 residues long: Small ribosomal subunit protein uS12 (139 aa).

Position 102 is a 3-methylthioaspartic acid (aspartate 102).

Belongs to the universal ribosomal protein uS12 family. As to quaternary structure, part of the 30S ribosomal subunit. Contacts proteins S8 and S17. May interact with IF1 in the 30S initiation complex.

With S4 and S5 plays an important role in translational accuracy. Its function is as follows. Interacts with and stabilizes bases of the 16S rRNA that are involved in tRNA selection in the A site and with the mRNA backbone. Located at the interface of the 30S and 50S subunits, it traverses the body of the 30S subunit contacting proteins on the other side and probably holding the rRNA structure together. The combined cluster of proteins S8, S12 and S17 appears to hold together the shoulder and platform of the 30S subunit. The sequence is that of Small ribosomal subunit protein uS12 from Bacillus pumilus (strain SAFR-032).